A 194-amino-acid chain; its full sequence is SRP-independent targeting protein 3 homolog (194 aa).

Helical transmembrane passes span Ile-43–Ile-63 and Leu-110–Leu-130.

Belongs to the PHO88 family.

The protein resides in the endoplasmic reticulum membrane. In terms of biological role, may function in a SRP (signal recognition particle) and GET (guided entry of tail-anchored proteins) independent pathway for targeting a broad range of substrate proteins to the endoplasmic reticulum. Involved in inorganic phosphate uptake. Also involved in telomere length regulation and maintenance. The chain is SRP-independent targeting protein 3 homolog from Schizosaccharomyces pombe (strain 972 / ATCC 24843) (Fission yeast).